The following is a 288-amino-acid chain: Protease HtpX (288 aa).

The next 2 helical transmembrane spans lie at 5–25 (IALF…VMSL) and 34–54 (SGLL…SLLL). His-140 provides a ligand contact to Zn(2+). The active site involves Glu-141. Residue His-144 participates in Zn(2+) binding. Helical transmembrane passes span 155 to 175 (LLQG…GGII) and 190 to 210 (FAYF…ATMI). Zn(2+) is bound at residue Glu-219.

This sequence belongs to the peptidase M48B family. Requires Zn(2+) as cofactor.

The protein resides in the cell inner membrane. This is Protease HtpX from Stenotrophomonas maltophilia (strain R551-3).